The chain runs to 145 residues: Halilectin 3, alpha chain (145 aa).

N73 carries N-linked (GlcNAc...) asparagine glycosylation.

Probable heterotrimer consisting of an alpha chain and two beta chains. The alpha chain can probably have different glycosylation states. In terms of processing, glycosylated.

In terms of biological role, lectin with affinity for N-acetyl-galactosamine, carragenan and glycoprotein porcine stomach mucin (PSM). Has metal-independent hemagglutinating activity towards erythrocytes from rabbit and human. Hemagglutinating activity is not inhibited by D-galactose, D-glucose, D-mannose, D-fucose, methyl-alpha-D-galactopyranoside, methyl-alpha-D-glucopyranoside, N-acetyl-glucosamine, N-acetyl-mannosamine, D-fructose, alpha-D-lactose, beta-D-lactose, D-lactulose, D-sucrose, fucoidan or glycoproteins thyroglobulin and ovalmucoid. This is Halilectin 3, alpha chain from Haliclona caerulea (Blue Caribbean sponge).